Consider the following 606-residue polypeptide: MACPF domain-containing protein At4g24290 (606 aa).

One can recognise an MACPF domain in the interval 1–332 (MALRLPASKA…PPIEELHQFL (332 aa)).

The protein belongs to the complement C6/C7/C8/C9 (TC 1.C.39) family.

Functionally, negatively controls the salicylic acid (SA)-mediated pathway of programmed cell death in plant immunity. This is MACPF domain-containing protein At4g24290 from Arabidopsis thaliana (Mouse-ear cress).